The following is a 478-amino-acid chain: Glutamate-1-semialdehyde 2,1-aminomutase, chloroplastic (478 aa).

Lysine 318 is subject to N6-(pyridoxal phosphate)lysine.

This sequence belongs to the class-III pyridoxal-phosphate-dependent aminotransferase family. HemL subfamily. In terms of assembly, homodimer. Pyridoxal 5'-phosphate serves as cofactor.

It is found in the plastid. The protein localises to the chloroplast. The enzyme catalyses (S)-4-amino-5-oxopentanoate = 5-aminolevulinate. The protein operates within porphyrin-containing compound metabolism; protoporphyrin-IX biosynthesis; 5-aminolevulinate from L-glutamyl-tRNA(Glu): step 2/2. It functions in the pathway porphyrin-containing compound metabolism; chlorophyll biosynthesis. The chain is Glutamate-1-semialdehyde 2,1-aminomutase, chloroplastic (GSA) from Nicotiana tabacum (Common tobacco).